The chain runs to 596 residues: Polyphenol oxidase B, chloroplastic (596 aa).

The interval 1 to 23 (MASVVCNSSSSTTTTTLKTPFTS) is disordered. The N-terminal 87 residues, 1–87 (MASVVCNSSS…ANAIPLAASA (87 aa)), are a transit peptide targeting the chloroplast. Over residues 8 to 23 (SSSSTTTTTLKTPFTS) the composition is skewed to low complexity. 2 cysteine pairs are disulfide-bonded: C98-C114 and C113-C182. 6 residues coordinate Cu cation: H181, H199, H208, H329, H333, and H371. The 2'-(S-cysteinyl)-histidine (Cys-His) cross-link spans 185–199 (CNGAYIIGGKELQVH).

The protein belongs to the tyrosinase family. Cu(2+) is required as a cofactor.

It is found in the plastid. It localises to the chloroplast thylakoid lumen. The enzyme catalyses 2 catechol + O2 = 2 1,2-benzoquinone + 2 H2O. In terms of biological role, catalyzes the oxidation of mono- and o-diphenols to o-diquinones. This is Polyphenol oxidase B, chloroplastic from Solanum lycopersicum (Tomato).